A 319-amino-acid chain; its full sequence is MYAERSSNLSIHEFWRRKSSKYMKTIKSEHLFVNHTCWYEETPETKKRNRXHRHRSSVKSIQSLEPSVNGSDSFYASYVDGYDLKRKFIVVETLTSEKKSRNYWKLIWETNCRVIVRFDINDWKNCQYWLHNHISDYTEGEFNVWKKKTISHNYYTEILLTVANKKNGKSKQITHYEYHEHPDGKLPIESARFIFFLKMVNKSQENYNISASSSNKCARTPIVVHSVGRYERAISFCALDICLNQIRETKSVSVPSVLLKIKGQTQLDFFSFEEYLIINKILLHSKWALELKTEDDGKTSFFRSRVRKYCLIFKRASVF.

The region spanning 7–285 is the Tyrosine-protein phosphatase domain; the sequence is SNLSIHEFWR…LIINKILLHS (279 aa).

The protein belongs to the protein-tyrosine phosphatase family.

The protein is Tyrosine phosphatase-like protein N3 (N7) of Microplitis demolitor bracovirus (isolate Webb) (MdBV).